The sequence spans 31 residues: Photosystem II reaction center protein T (31 aa).

The chain crosses the membrane as a helical span at residues 3-23 (ALVYTFLLIGTLGIIFFAIFF).

It belongs to the PsbT family. PSII is composed of 1 copy each of membrane proteins PsbA, PsbB, PsbC, PsbD, PsbE, PsbF, PsbH, PsbI, PsbJ, PsbK, PsbL, PsbM, PsbT, PsbY, PsbZ, Psb30/Ycf12, at least 3 peripheral proteins of the oxygen-evolving complex and a large number of cofactors. It forms dimeric complexes.

The protein resides in the plastid. It is found in the chloroplast thylakoid membrane. Found at the monomer-monomer interface of the photosystem II (PS II) dimer, plays a role in assembly and dimerization of PSII. PSII is a light-driven water plastoquinone oxidoreductase, using light energy to abstract electrons from H(2)O, generating a proton gradient subsequently used for ATP formation. In Stigeoclonium helveticum (Green alga), this protein is Photosystem II reaction center protein T.